The chain runs to 528 residues: Poly(A) RNA polymerase GLD2 (528 aa).

Disordered regions lie at residues 1–41 (MYPN…QPQQ) and 99–121 (RDQS…KRRS). Low complexity-rich tracts occupy residues 16–32 (PCEQ…EQPL) and 102–113 (SPLISPASPSSS). Mg(2+)-binding residues include aspartate 259 and aspartate 261. The PAP-associated domain maps to 428 to 481 (LGDLLLGFLKYFAIEFDWSKDIISVREAKALPRSDDYEWRNKFICVEEPYDRTN).

Belongs to the DNA polymerase type-B-like family. GLD2 subfamily. As to quaternary structure, component of a complex at least composed of cpeb1, cpsf1, tent2/gld2, pabpc1/ePAB, parn and sympk. Following oocyte maturation, parn is expelled from the complex. Interacts with rbm9 and sympk. Mg(2+) serves as cofactor. It depends on Mn(2+) as a cofactor.

The protein resides in the cytoplasm. It carries out the reaction RNA(n) + ATP = RNA(n)-3'-adenine ribonucleotide + diphosphate. Cytoplasmic poly(A) RNA polymerase that adds successive AMP monomers to the 3'-end of specific RNAs, forming a poly(A) tail. In contrast to the canonical nuclear poly(A) RNA polymerase, it only adds poly(A) to selected cytoplasmic mRNAs during oocyte maturation. Plays a central role during oocyte maturation by mediating polyadenylation of dormant mRNAs, which contain 5'AAUAAA-3' sequence in their 3'-UTR. In immature oocytes, polyadenylation of poly(A) tails is counteracted by the ribonuclease parn. During maturation parn is excluded from the ribonucleoprotein complex, allowing poly(A) elongation and activation of mRNAs. May not play a role in replication-dependent histone mRNA degradation. This chain is Poly(A) RNA polymerase GLD2 (tent2), found in Xenopus tropicalis (Western clawed frog).